The sequence spans 430 residues: Aspartate aminotransferase, mitochondrial (430 aa).

The transit peptide at 1-29 (MALLHSGRVLSGIAAAFHPGLAAAASARA) directs the protein to the mitochondrion. Thr-48 carries the post-translational modification Phosphothreonine. Lys-59 carries the N6-acetyllysine modification. Position 65 (Gly-65) interacts with substrate. The residue at position 73 (Lys-73) is an N6-acetyllysine; alternate. Lys-73 carries the post-translational modification N6-succinyllysine; alternate. Lys-82 bears the N6-acetyllysine mark. An N6-acetyllysine; alternate modification is found at Lys-90. Residue Lys-90 is modified to N6-succinyllysine; alternate. Tyr-96 is modified (3'-nitrotyrosine; alternate). The residue at position 96 (Tyr-96) is a Phosphotyrosine; alternate. N6-acetyllysine; alternate is present on residues Lys-107 and Lys-122. 2 positions are modified to N6-succinyllysine; alternate: Lys-107 and Lys-122. Ser-143 carries the phosphoserine modification. The residue at position 159 (Lys-159) is an N6-acetyllysine; alternate. At Lys-159 the chain carries N6-succinyllysine; alternate. Trp-162 provides a ligand contact to substrate. An N6-acetyllysine; alternate modification is found at Lys-185. Lys-185 is subject to N6-succinyllysine; alternate. Residue Asn-215 participates in substrate binding. Lys-227 carries the post-translational modification N6-succinyllysine. Lys-234 carries the post-translational modification N6-acetyllysine. 2 positions are modified to N6-acetyllysine; alternate: Lys-279 and Lys-296. Residue Lys-279 is modified to N6-(pyridoxal phosphate)lysine; alternate. Lys-296 bears the N6-succinyllysine; alternate mark. At Lys-302 the chain carries N6-acetyllysine. Residue Lys-309 is modified to N6-acetyllysine; alternate. At Lys-309 the chain carries N6-succinyllysine; alternate. Position 313 is an asymmetric dimethylarginine (Arg-313). Position 333 is a phosphothreonine (Thr-333). At Lys-338 the chain carries N6-acetyllysine; alternate. At Lys-338 the chain carries N6-succinyllysine; alternate. Lys-345 bears the N6-acetyllysine mark. Lys-363 is subject to N6-acetyllysine; alternate. At Lys-363 the chain carries N6-succinyllysine; alternate. N6-acetyllysine is present on residues Lys-364 and Lys-387. N6-acetyllysine; alternate occurs at positions 396 and 404. 2 positions are modified to N6-succinyllysine; alternate: Lys-396 and Lys-404. Residue Arg-407 participates in substrate binding.

This sequence belongs to the class-I pyridoxal-phosphate-dependent aminotransferase family. As to quaternary structure, homodimer. It depends on pyridoxal 5'-phosphate as a cofactor.

It localises to the mitochondrion matrix. Its subcellular location is the cell membrane. It carries out the reaction L-aspartate + 2-oxoglutarate = oxaloacetate + L-glutamate. It catalyses the reaction L-kynurenine + 2-oxoglutarate = kynurenate + L-glutamate + H2O. Functionally, catalyzes the irreversible transamination of the L-tryptophan metabolite L-kynurenine to form kynurenic acid (KA). As a member of the malate-aspartate shuttle, it has a key role in the intracellular NAD(H) redox balance. Is important for metabolite exchange between mitochondria and cytosol, and for amino acid metabolism. Facilitates cellular uptake of long-chain free fatty acids. The sequence is that of Aspartate aminotransferase, mitochondrial (GOT2) from Macaca fascicularis (Crab-eating macaque).